The sequence spans 423 residues: Histidine--tRNA ligase (423 aa).

It belongs to the class-II aminoacyl-tRNA synthetase family. As to quaternary structure, homodimer.

The protein localises to the cytoplasm. The catalysed reaction is tRNA(His) + L-histidine + ATP = L-histidyl-tRNA(His) + AMP + diphosphate + H(+). This Phytoplasma mali (strain AT) protein is Histidine--tRNA ligase.